A 297-amino-acid polypeptide reads, in one-letter code: Indole-3-glycerol phosphate synthase (297 aa).

The protein belongs to the TrpC family.

It catalyses the reaction 1-(2-carboxyphenylamino)-1-deoxy-D-ribulose 5-phosphate + H(+) = (1S,2R)-1-C-(indol-3-yl)glycerol 3-phosphate + CO2 + H2O. It participates in amino-acid biosynthesis; L-tryptophan biosynthesis; L-tryptophan from chorismate: step 4/5. In Trichodesmium erythraeum (strain IMS101), this protein is Indole-3-glycerol phosphate synthase.